Here is a 206-residue protein sequence, read N- to C-terminus: Protein-methionine-sulfoxide reductase heme-binding subunit MsrQ (206 aa).

The next 6 membrane-spanning stretches (helical) occupy residues 14–34 (IKPLLFVAGLLPFARWFWLGA), 45–65 (FLTRSSGTWTLVCLLVTLAIT), 82–102 (MCGLFAFFYGSLHFLAWVWWD), 118–138 (PFITVGFAAFVLMAALAATST), 149–169 (WQVLHRAVYAIGLLAILHFWW), and 179–199 (QPLLYGSVLALLLGWRVAAWW).

Belongs to the MsrQ family. Heterodimer of a catalytic subunit (MsrP) and a heme-binding subunit (MsrQ). It depends on FMN as a cofactor. Heme b serves as cofactor.

Its subcellular location is the cell inner membrane. Functionally, part of the MsrPQ system that repairs oxidized periplasmic proteins containing methionine sulfoxide residues (Met-O), using respiratory chain electrons. Thus protects these proteins from oxidative-stress damage caused by reactive species of oxygen and chlorine generated by the host defense mechanisms. MsrPQ is essential for the maintenance of envelope integrity under bleach stress, rescuing a wide series of structurally unrelated periplasmic proteins from methionine oxidation. MsrQ provides electrons for reduction to the reductase catalytic subunit MsrP, using the quinone pool of the respiratory chain. The polypeptide is Protein-methionine-sulfoxide reductase heme-binding subunit MsrQ (Bordetella bronchiseptica (strain ATCC BAA-588 / NCTC 13252 / RB50) (Alcaligenes bronchisepticus)).